A 57-amino-acid polypeptide reads, in one-letter code: Ribulose bisphosphate carboxylase large chain (57 aa).

A propeptide spanning residues 1 to 2 is cleaved from the precursor; that stretch reads MS. N-acetylproline is present on Pro3. N6,N6,N6-trimethyllysine is present on Lys14.

Belongs to the RuBisCO large chain family. Type I subfamily. In terms of assembly, heterohexadecamer of 8 large chains and 8 small chains.

It is found in the plastid. The protein resides in the chloroplast. The catalysed reaction is 2 (2R)-3-phosphoglycerate + 2 H(+) = D-ribulose 1,5-bisphosphate + CO2 + H2O. It carries out the reaction D-ribulose 1,5-bisphosphate + O2 = 2-phosphoglycolate + (2R)-3-phosphoglycerate + 2 H(+). Functionally, ruBisCO catalyzes two reactions: the carboxylation of D-ribulose 1,5-bisphosphate, the primary event in carbon dioxide fixation, as well as the oxidative fragmentation of the pentose substrate in the photorespiration process. Both reactions occur simultaneously and in competition at the same active site. The protein is Ribulose bisphosphate carboxylase large chain (rbcL) of Buxus sempervirens (Common box).